The chain runs to 631 residues: Polyadenylate-binding protein 3 (631 aa).

4 consecutive RRM domains span residues 11 to 89 (ASLY…WSQR), 99 to 175 (GNIF…QFKS), 191 to 268 (PNVY…RAQK), and 294 to 370 (VNLY…LAQR). Y140 bears the Phosphotyrosine mark. A Phosphoserine modification is found at S315. K361 bears the N6,N6-dimethyllysine; alternate mark. A Glycyl lysine isopeptide (Lys-Gly) (interchain with G-Cter in SUMO2); alternate cross-link involves residue K361. Y364 is subject to Phosphotyrosine. Omega-N-methylarginine is present on residues R426, R430, and R449. R501 carries the dimethylated arginine modification. Residue R513 is modified to Omega-N-methylarginine. The region spanning 537-614 (QETLTASRLA…AVAVLQAHQA (78 aa)) is the PABC domain.

This sequence belongs to the polyadenylate-binding protein type-1 family. Testis specific.

The protein localises to the cytoplasm. Functionally, binds the poly(A) tail of mRNA. May be involved in cytoplasmic regulatory processes of mRNA metabolism. Binds poly(A) with a slightly lower affinity as compared to PABPC1. The sequence is that of Polyadenylate-binding protein 3 (PABPC3) from Homo sapiens (Human).